A 155-amino-acid chain; its full sequence is Secreted RxLR effector protein 38 (155 aa).

Positions 1 to 17 (MHLIYIVMAATATTLHA) are cleaved as a signal peptide. Residues 49-64 (RFLRGAYEDVHREEER) carry the RxLR-dEER motif.

The protein belongs to the RxLR effector family.

The protein localises to the secreted. It localises to the host nucleus. The protein resides in the host cytoplasm. Functionally, secreted effector that completely suppresses the host cell death induced by cell death-inducing proteins. This Plasmopara viticola (Downy mildew of grapevine) protein is Secreted RxLR effector protein 38.